A 159-amino-acid chain; its full sequence is Cyclic pyranopterin monophosphate synthase (159 aa).

Residues 75–77 (LCH) and 113–114 (ME) each bind substrate. Asp128 is a catalytic residue.

The protein belongs to the MoaC family. In terms of assembly, homohexamer; trimer of dimers.

The catalysed reaction is (8S)-3',8-cyclo-7,8-dihydroguanosine 5'-triphosphate = cyclic pyranopterin phosphate + diphosphate. The protein operates within cofactor biosynthesis; molybdopterin biosynthesis. Catalyzes the conversion of (8S)-3',8-cyclo-7,8-dihydroguanosine 5'-triphosphate to cyclic pyranopterin monophosphate (cPMP). This chain is Cyclic pyranopterin monophosphate synthase, found in Aliivibrio salmonicida (strain LFI1238) (Vibrio salmonicida (strain LFI1238)).